The chain runs to 261 residues: Zinc finger protein 664 (261 aa).

C2H2-type zinc fingers lie at residues Tyr-3–His-25, His-31–His-53, Tyr-59–His-81, Tyr-87–His-109, Tyr-115–His-137, Phe-143–His-165, Tyr-171–His-193, Tyr-199–His-221, and Phe-227–His-249. Residue Lys-257 forms a Glycyl lysine isopeptide (Lys-Gly) (interchain with G-Cter in SUMO2) linkage.

It belongs to the krueppel C2H2-type zinc-finger protein family.

It localises to the nucleus. May be involved in transcriptional regulation. The sequence is that of Zinc finger protein 664 (ZNF664) from Pongo abelii (Sumatran orangutan).